The sequence spans 488 residues: Surface lipoprotein assembly modifier 1 (488 aa).

An N-terminal signal peptide occupies residues methionine 1–alanine 31. Residues glutamate 32–aspartate 202 are N-terminal domain. TPR repeat units lie at residues methionine 118–alanine 151 and alanine 171–tryptophan 204. The C-terminal probable beta barrel, partially restores export of lipoproteins stretch occupies residues alanine 203–phenylalanine 488. Transmembrane regions (beta stranded) follow at residues tryptophan 204–arginine 214, valine 241–serine 252, tryptophan 257–glycine 267, threonine 280–aspartate 291, lysine 294–arginine 304, asparagine 316–tryptophan 325, tryptophan 330–arginine 340, leucine 354–arginine 364, glutamine 368–tyrosine 377, glycine 393–tryptophan 402, leucine 407–lysine 417, leucine 439–arginine 448, isoleucine 455–arginine 464, and asparagine 478–phenylalanine 488.

It belongs to the Slam family. As to quaternary structure, interacts with the C-terminal domain of surface lipoprotein TbpB.

It localises to the cell outer membrane. Its function is as follows. Required for correct export to the cell surface of some cell outer membrane lipoproteins both in Neisseria and heterologously in E.coli. This chain is Surface lipoprotein assembly modifier 1, found in Neisseria meningitidis serogroup B (strain ATCC BAA-335 / MC58).